A 461-amino-acid chain; its full sequence is MKVLFATGEAFPFVKTGGLGDVSYSLPKTLKQKENVDIRVILPKYSKISNELLKDARHLGHKEIWVAHHNEYVGIEEVELEGVIYYFVDNERYFKRPNVYGEFDDCERFLFFCKAVVETMDITKFKPDIIHCNDWQSALIPIYLKERGIYDVKTIFTIHNLRFQGFFFNNVIEDLLEIDRAKYFQEDGLKYYDMISFLKGGVVYSDYITTVSDSYAEEIKTQELGEGIHGLFQKYDYKLSGIVNGIDKISYPLSKKPHKILKADLQKKLGLDVEEDTPLIVIITRLDRQKGLDYIVEKFDEMMSLGIQFILLGTGEKRYEHFFAYQEYLHKGQVCSYIGFNQELSTEIYAGADIFLMPSVFEPCGLSQMIAMRYGCIPVVRETGGLKDTVKPYNEYTGEGDGFGFKQANADDMIKTLKYAIKMYHRPNVWQEIIKNAKKRDNSWDKPAKRYKELYQRLIEG.

Lys-15 contributes to the ADP-alpha-D-glucose binding site.

This sequence belongs to the glycosyltransferase 1 family. Bacterial/plant glycogen synthase subfamily.

The catalysed reaction is [(1-&gt;4)-alpha-D-glucosyl](n) + ADP-alpha-D-glucose = [(1-&gt;4)-alpha-D-glucosyl](n+1) + ADP + H(+). It functions in the pathway glycan biosynthesis; glycogen biosynthesis. Synthesizes alpha-1,4-glucan chains using ADP-glucose. In Fusobacterium nucleatum subsp. nucleatum (strain ATCC 25586 / DSM 15643 / BCRC 10681 / CIP 101130 / JCM 8532 / KCTC 2640 / LMG 13131 / VPI 4355), this protein is Glycogen synthase.